The following is a 250-amino-acid chain: Octanoyltransferase (250 aa).

In terms of domain architecture, BPL/LPL catalytic spans 49–230; that stretch reads DEINDVILVL…ALDDAFAGRL (182 aa). Substrate is bound by residues 87 to 94, 160 to 162, and 173 to 175; these read RGGRITWH, ALG, and GLA. The active-site Acyl-thioester intermediate is Cys191.

This sequence belongs to the LipB family.

The protein resides in the cytoplasm. It catalyses the reaction octanoyl-[ACP] + L-lysyl-[protein] = N(6)-octanoyl-L-lysyl-[protein] + holo-[ACP] + H(+). It participates in protein modification; protein lipoylation via endogenous pathway; protein N(6)-(lipoyl)lysine from octanoyl-[acyl-carrier-protein]: step 1/2. Its function is as follows. Catalyzes the transfer of endogenously produced octanoic acid from octanoyl-acyl-carrier-protein onto the lipoyl domains of lipoate-dependent enzymes. Lipoyl-ACP can also act as a substrate although octanoyl-ACP is likely to be the physiological substrate. The chain is Octanoyltransferase from Corynebacterium diphtheriae (strain ATCC 700971 / NCTC 13129 / Biotype gravis).